A 71-amino-acid chain; its full sequence is uncharacterized protein (71 aa).

This is an uncharacterized protein from Stutzerimonas stutzeri (strain A1501) (Pseudomonas stutzeri).